Reading from the N-terminus, the 318-residue chain is NADH-ubiquinone oxidoreductase chain 1 (318 aa).

Transmembrane regions (helical) follow at residues 3–23 (FINILTLLIPILIAMAFLTLV), 70–90 (LFIIAPTLSLTLALSLWIPLP), 100–120 (LGMLFILATSSLSVYSILWSG), 146–166 (MAIILLSVLLMSGSFSLQMLI), 171–191 (HIWLLIPAWPMAMMWYISTLA), 231–251 (IILMNALTSIVFLGPLYHINY), 254–273 (LYSTSFMTETLLLSTTFLWI), and 294–314 (LPLTLAFCMWYISLPIFLAGI).

It belongs to the complex I subunit 1 family. As to quaternary structure, core subunit of respiratory chain NADH dehydrogenase (Complex I) which is composed of 45 different subunits.

It is found in the mitochondrion inner membrane. It carries out the reaction a ubiquinone + NADH + 5 H(+)(in) = a ubiquinol + NAD(+) + 4 H(+)(out). Its function is as follows. Core subunit of the mitochondrial membrane respiratory chain NADH dehydrogenase (Complex I) which catalyzes electron transfer from NADH through the respiratory chain, using ubiquinone as an electron acceptor. Essential for the catalytic activity and assembly of complex I. The protein is NADH-ubiquinone oxidoreductase chain 1 of Rattus norvegicus (Rat).